The primary structure comprises 325 residues: tRNA N6-adenosine threonylcarbamoyltransferase (325 aa).

Fe cation is bound by residues H111 and H115. Residues 134-138, D167, G180, and N277 each bind substrate; that span reads LISGG. D305 serves as a coordination point for Fe cation.

Belongs to the KAE1 / TsaD family. It depends on Fe(2+) as a cofactor.

It localises to the cytoplasm. The protein localises to the secreted. The catalysed reaction is L-threonylcarbamoyladenylate + adenosine(37) in tRNA = N(6)-L-threonylcarbamoyladenosine(37) in tRNA + AMP + H(+). Required for the formation of a threonylcarbamoyl group on adenosine at position 37 (t(6)A37) in tRNAs that read codons beginning with adenine. Is involved in the transfer of the threonylcarbamoyl moiety of threonylcarbamoyl-AMP (TC-AMP) to the N6 group of A37, together with TsaE and TsaB. TsaD likely plays a direct catalytic role in this reaction. This is tRNA N6-adenosine threonylcarbamoyltransferase from Mannheimia haemolytica (Pasteurella haemolytica).